Consider the following 223-residue polypeptide: ATP synthase subunit a 1 (223 aa).

5 helical membrane-spanning segments follow: residues 20–40 (QTIV…AFLT), 78–98 (YLSY…FTII), 107–127 (SLST…LYGI), 173–193 (VMII…LMSV), and 194–214 (LGLL…TVYI).

This sequence belongs to the ATPase A chain family. F-type ATPases have 2 components, CF(1) - the catalytic core - and CF(0) - the membrane proton channel. CF(1) has five subunits: alpha(3), beta(3), gamma(1), delta(1), epsilon(1). CF(0) has four main subunits: a, b, b' and c.

The protein localises to the cell inner membrane. Key component of the proton channel; it plays a direct role in the translocation of protons across the membrane. The sequence is that of ATP synthase subunit a 1 from Prosthecochloris aestuarii (strain DSM 271 / SK 413).